A 384-amino-acid polypeptide reads, in one-letter code: Putative glutamate--cysteine ligase 2-1 (384 aa).

The protein belongs to the glutamate--cysteine ligase type 2 family. YbdK subfamily.

The catalysed reaction is L-cysteine + L-glutamate + ATP = gamma-L-glutamyl-L-cysteine + ADP + phosphate + H(+). In terms of biological role, ATP-dependent carboxylate-amine ligase which exhibits weak glutamate--cysteine ligase activity. In Paenarthrobacter aurescens (strain TC1), this protein is Putative glutamate--cysteine ligase 2-1.